Consider the following 540-residue polypeptide: Probable metabolite transport protein YFL040W (540 aa).

Residues 1–29 (MTAMKAIVWRLPKMPKIKITKTYEVTKIT) lie on the Cytoplasmic side of the membrane. A helical transmembrane segment spans residues 30-50 (AILTLVGFIMGLEVPSLATFL). The Extracellular portion of the chain corresponds to 51–67 (TNKTFNEYFKYPTPLQQ). Asparagine 52 is a glycosylation site (N-linked (GlcNAc...) asparagine). Residues 68 to 88 (GLLMGSTPLGGIMGCFICCIM) traverse the membrane as a helical segment. Over 89–101 (NDRFSRIYQFQSG) the chain is Cytoplasmic. A helical membrane pass occupies residues 102–122 (IIIWNIVTLLNFCIWDILGLL). The Extracellular portion of the chain corresponds to 123 to 126 (ICRM). The chain crosses the membrane as a helical span at residues 127 to 147 (IKGMILGNFSILVASYANEVI). At 148-158 (PRGKRGSTMSY) the chain is on the cytoplasmic side. The chain crosses the membrane as a helical span at residues 159–179 (IQLCLTIGILVMHYLCIALSL). At 180 to 187 (WDSHFAFR) the chain is on the extracellular side. The helical transmembrane segment at 188–208 (IAWCIGIIPGLLFWMASYALP) threads the bilayer. Over 209 to 275 (ESYHWLVLHG…KKLPRGSFKP (67 aa)) the chain is Cytoplasmic. A helical transmembrane segment spans residues 276-296 (LILGMTLQLLVQFSGINIILG). At 297–313 (YITYICEIVGLEGNVKL) the chain is on the extracellular side. Residues 314-334 (FTSSIPYFINMVLSLLPITFI) traverse the membrane as a helical segment. Over 335 to 341 (DYTSRKL) the chain is Cytoplasmic. A helical transmembrane segment spans residues 342–362 (ITLLGGFPISGLLITIGALFV). Residues 363–385 (KYGQDTKPIDGNRSLVWSIGENP) are Extracellular-facing. Residue asparagine 374 is glycosylated (N-linked (GlcNAc...) asparagine). The chain crosses the membrane as a helical span at residues 386–406 (FVGGWILTLCFLIVGIFAMSL). At 407-428 (SSIPWVYTNEMLPSRVKVKGFA) the chain is on the cytoplasmic side. Residues 429 to 449 (ICVTFGWLGNFILTFLCPVMI) form a helical membrane-spanning segment. The Extracellular segment spans residues 450-455 (ERLKGT). The chain crosses the membrane as a helical span at residues 456–476 (TFIIFGSLTFLISLSVLIWFP). Topologically, residues 477 to 540 (ETKGMSIEDI…KLKSDEEMII (64 aa)) are cytoplasmic. Positions 499–540 (NLHGEKGIKTPDSNSNGGSTRSSQEGQLHKPIKLKSDEEMII) are disordered. Residues 509–524 (PDSNSNGGSTRSSQEG) show a composition bias toward polar residues.

The protein belongs to the major facilitator superfamily. Sugar transporter (TC 2.A.1.1) family.

The protein localises to the membrane. This chain is Probable metabolite transport protein YFL040W, found in Saccharomyces cerevisiae (strain ATCC 204508 / S288c) (Baker's yeast).